A 416-amino-acid chain; its full sequence is Actin-like protein 9 (416 aa).

The segment at 1–23 is disordered; the sequence is MDPNQGNPLEPQDSPEIPKPSLN.

This sequence belongs to the actin family. As to quaternary structure, interacts with ACTL7A.

The protein localises to the cytoplasmic vesicle. It is found in the secretory vesicle. Its subcellular location is the acrosome. It localises to the cytoplasm. The protein resides in the cytoskeleton. The protein localises to the perinuclear theca. In terms of biological role, testis-specic protein that plays an important role in fusion of proacrosomal vesicles and perinuclear theca formation. The protein is Actin-like protein 9 (ACTL9) of Bos taurus (Bovine).